Here is a 119-residue protein sequence, read N- to C-terminus: NADH-quinone oxidoreductase subunit A (119 aa).

Helical transmembrane passes span 7–27, 63–83, and 88–108; these read FPVL…MFLG, LIAI…PWGV, and IGWL…VGFV.

Belongs to the complex I subunit 3 family. As to quaternary structure, NDH-1 is composed of 14 different subunits. Subunits NuoA, H, J, K, L, M, N constitute the membrane sector of the complex.

It localises to the cell inner membrane. It carries out the reaction a quinone + NADH + 5 H(+)(in) = a quinol + NAD(+) + 4 H(+)(out). NDH-1 shuttles electrons from NADH, via FMN and iron-sulfur (Fe-S) centers, to quinones in the respiratory chain. The immediate electron acceptor for the enzyme in this species is believed to be ubiquinone. Couples the redox reaction to proton translocation (for every two electrons transferred, four hydrogen ions are translocated across the cytoplasmic membrane), and thus conserves the redox energy in a proton gradient. The chain is NADH-quinone oxidoreductase subunit A from Polynucleobacter necessarius subsp. necessarius (strain STIR1).